The primary structure comprises 175 residues: Zinc metalloproteinase-disintegrin-like catroriarin (175 aa).

Residues 1-63 (NPCCDAATCK…ECPADVFHKN (63 aa)) form the Disintegrin domain. Cystine bridges form between Cys-3/Cys-26, Cys-17/Cys-23, Cys-22/Cys-48, Cys-35/Cys-55, Cys-42/Cys-74, Cys-67/Cys-79, Cys-101/Cys-147, Cys-114/Cys-124, and Cys-131/Cys-171. A D/ECD-tripeptide motif is present at residues 41–43 (ECD). The Ca(2+) site is built by Asp-43, Pro-44, Glu-46, Asp-58, and Val-59.

The protein belongs to the venom metalloproteinase (M12B) family. P-III subfamily. P-IIIa sub-subfamily. Monomer. Requires Zn(2+) as cofactor. In terms of processing, glycosylated. Expressed by the venom gland.

It localises to the secreted. Functionally, snake venom metalloproteinase that impairs hemostasis in the envenomed animal. The chain is Zinc metalloproteinase-disintegrin-like catroriarin from Crotalus atrox (Western diamondback rattlesnake).